The primary structure comprises 814 residues: MYFDRTKINVESMKQAILERVYCGVVQTPQSASTRDIFTAVAKTVLEWMAKGWLKTQSSYYDNDVKRVYYISMEFLLGRSLKSNLLNLGLLDLVKEALFDLGYDFDQLVEMEHDAGLGNGGLGRLAACFLDSMATLEIPAYGYGLRYDYGIFDQKIENGFQVESPDEWLRYGNPWEICRGEYLYPVHFYGKVKHSIDSRGRDVAELVDSQEVLAMAYDVPVPGFNNDAVNSLRLWQAQSRHGFEFSYFNHGNYIRAIEDIALAGNITRVLYPNDSISEGQELRLKQEYFLVSATIQDILRRYTKTHLSLDKLSEKVSVQLNDTHPALGIAEMMRLLVDREELDWDVAWDATTKIFNYTNHTILPEALERWSLDLFSKVLPRHLEIIYEINARWLAKVSQKYPGDNDKRRALSIIEEGSSKFVNMANLAVVGTNKVNGVSTFHSQLIKSTLFKDFVEFFPDKFINVTNGITPRRWLALSNKKLSSLLNRTIGTEYLTNLTHLHKVIPLAEDSGFREEWRNIKIQNKEELAARIYKELGVTVNPQSIFDCHIKRIHEYKRQLMNILRVIYFYNEIRNGSGEIVPTTVIFGGKAAPGYAMAKLIIKLINNVAAVVNNDPKVNDQLKVIFWPNYRVSLAEAIIPATDLSEQISTAGMEASGTGNMKFALNGALTIGTMDGANIEMAEHIGKEHMFIFGLLEEEISELRKEYYPQGICNANPTIQEILDMIAQAKFSQEDKDLFKPIVNRLLNEGDPFFVLADLEAYINTQNRVASLFKQPEEWTKKSIYNVGGIGFFSSDRSIAEYASNIWNVSRPTS.

N6-(pyridoxal phosphate)lysine is present on lysine 662.

This sequence belongs to the glycogen phosphorylase family. Requires pyridoxal 5'-phosphate as cofactor.

The catalysed reaction is [(1-&gt;4)-alpha-D-glucosyl](n) + phosphate = [(1-&gt;4)-alpha-D-glucosyl](n-1) + alpha-D-glucose 1-phosphate. In terms of biological role, phosphorylase is an important allosteric enzyme in carbohydrate metabolism. Enzymes from different sources differ in their regulatory mechanisms and in their natural substrates. However, all known phosphorylases share catalytic and structural properties. This chain is Glycogen phosphorylase (glgP), found in Chlamydia trachomatis serovar D (strain ATCC VR-885 / DSM 19411 / UW-3/Cx).